Reading from the N-terminus, the 350-residue chain is MLISQRPTLSEETVAENRSRFVIEPLEPGFGYTLGNSLRRTLLSSIPGAAVTSIRIDGVLHEFTTVPGVKEDVTDIILNLKGLVVSSDDDEPVTMYLRKQGPGVVTAGDIVPPAGVTVHNPDMHIATLNDKGKLEVELVVERGRGYVPAVQNKASGAEIGRIPVDSIYSPVLKVTYKVEATRVEQRTDFDKLIIDVETKNSISPRDALASAGGTLVELFGLARELNADSEHIEIGPSPAEADHIASFALPIDDLDLTVRSYNCLKREGVHTVGELVARTESDLLDIRNFGQKSIDEVKIKLHQLGLSLKDSPATFDPSEVAGYDAATGTWTSDAGYDLDDNQDYAETEQL.

An alpha N-terminal domain (alpha-NTD) region spans residues 1-226; it reads MLISQRPTLS…ELFGLARELN (226 aa). Positions 241-350 are alpha C-terminal domain (alpha-CTD); that stretch reads ADHIASFALP…NQDYAETEQL (110 aa). Residues 328-350 form a disordered region; the sequence is GTWTSDAGYDLDDNQDYAETEQL. Residues 336-350 are compositionally biased toward acidic residues; it reads YDLDDNQDYAETEQL.

The protein belongs to the RNA polymerase alpha chain family. Homodimer. The RNAP catalytic core consists of 2 alpha, 1 beta, 1 beta' and 1 omega subunit. When a sigma factor is associated with the core the holoenzyme is formed, which can initiate transcription.

The enzyme catalyses RNA(n) + a ribonucleoside 5'-triphosphate = RNA(n+1) + diphosphate. In terms of biological role, DNA-dependent RNA polymerase catalyzes the transcription of DNA into RNA using the four ribonucleoside triphosphates as substrates. In Mycolicibacterium smegmatis (strain ATCC 700084 / mc(2)155) (Mycobacterium smegmatis), this protein is DNA-directed RNA polymerase subunit alpha.